The primary structure comprises 157 residues: Transcription elongation factor GreA (157 aa).

A coiled-coil region spans residues 12 to 74; it reads LKKLEEELEY…TLEAMLKNAK (63 aa).

Belongs to the GreA/GreB family.

Necessary for efficient RNA polymerase transcription elongation past template-encoded arresting sites. The arresting sites in DNA have the property of trapping a certain fraction of elongating RNA polymerases that pass through, resulting in locked ternary complexes. Cleavage of the nascent transcript by cleavage factors such as GreA or GreB allows the resumption of elongation from the new 3'terminus. GreA releases sequences of 2 to 3 nucleotides. This Thermoanaerobacter pseudethanolicus (strain ATCC 33223 / 39E) (Clostridium thermohydrosulfuricum) protein is Transcription elongation factor GreA.